Reading from the N-terminus, the 174-residue chain is Adenine phosphoribosyltransferase (174 aa).

It belongs to the purine/pyrimidine phosphoribosyltransferase family. In terms of assembly, homodimer.

It is found in the cytoplasm. The enzyme catalyses AMP + diphosphate = 5-phospho-alpha-D-ribose 1-diphosphate + adenine. Its pathway is purine metabolism; AMP biosynthesis via salvage pathway; AMP from adenine: step 1/1. Catalyzes a salvage reaction resulting in the formation of AMP, that is energically less costly than de novo synthesis. The polypeptide is Adenine phosphoribosyltransferase (Mycobacterium sp. (strain JLS)).